The chain runs to 116 residues: Class I hydrophobin 1 (116 aa).

The first 19 residues, 1-19, serve as a signal peptide directing secretion; it reads MLFKQAILVATTLTDLAVA. 4 cysteine pairs are disulfide-bonded: Cys-35/Cys-95, Cys-42/Cys-89, Cys-43/Cys-76, and Cys-96/Cys-109. 2 N-linked (GlcNAc...) asparagine glycosylation sites follow: Asn-44 and Asn-100.

It belongs to the fungal hydrophobin family. As to quaternary structure, self-assembles to form functional amyloid fibrils called rodlets. Self-assembly into fibrillar rodlets occurs spontaneously at hydrophobic:hydrophilic interfaces and the rodlets further associate laterally to form amphipathic monolayers.

The protein localises to the secreted. The protein resides in the cell wall. Aerial growth, conidiation, and dispersal of filamentous fungi in the environment rely upon a capability of their secreting small amphipathic proteins called hydrophobins (HPBs) with low sequence identity. Class I can self-assemble into an outermost layer of rodlet bundles on aerial cell surfaces, conferring cellular hydrophobicity that supports fungal growth, development and dispersal; whereas Class II form highly ordered films at water-air interfaces through intermolecular interactions but contribute nothing to the rodlet structure. The sequence is that of Class I hydrophobin 1 from Pleurotus ostreatus (Oyster mushroom).